Reading from the N-terminus, the 337-residue chain is Phosphate acyltransferase (337 aa).

Belongs to the PlsX family. Homodimer. Probably interacts with PlsY.

It localises to the cytoplasm. The catalysed reaction is a fatty acyl-[ACP] + phosphate = an acyl phosphate + holo-[ACP]. It participates in lipid metabolism; phospholipid metabolism. Its function is as follows. Catalyzes the reversible formation of acyl-phosphate (acyl-PO(4)) from acyl-[acyl-carrier-protein] (acyl-ACP). This enzyme utilizes acyl-ACP as fatty acyl donor, but not acyl-CoA. This chain is Phosphate acyltransferase, found in Ehrlichia chaffeensis (strain ATCC CRL-10679 / Arkansas).